The primary structure comprises 410 residues: Lissencephaly-1 homolog A (410 aa).

The LisH domain occupies 7-39; sequence QRDELNRAIADYLRSNGYEEAYSTFKKEAELDM. Residues 56 to 82 adopt a coiled-coil conformation; it reads TSVIRLQKKVMELESKLNEAKEEITLG. WD repeat units follow at residues 106 to 147, 148 to 187, 190 to 229, 232 to 271, 274 to 333, 336 to 375, and 378 to 410; these read GHRS…RTLK, GHTD…CIRT, GHDH…CVKT, GHRE…CKAE, EHEH…CLMT, GHDN…CMKT, and AHEH…WECR.

The protein belongs to the WD repeat LIS1/nudF family. As to quaternary structure, can self-associate. Component of the cytosolic PAF-AH (I) heterotetrameric enzyme, which is composed of PAFAH1B1 (beta), PAFAH1B2 (alpha2) and PAFAH1B3 (alpha1) subunits. The catalytic activity of the enzyme resides in the alpha1 (PAFAH1B3) and alpha2 (PAFAH1B2) subunits, whereas the beta subunit (PAFAH1B1) has regulatory activity. Trimer formation is not essential for the catalytic activity. Interacts with dynein, dynactin, nde1 and ndel1.

It localises to the cytoplasm. It is found in the cytoskeleton. The protein resides in the microtubule organizing center. The protein localises to the centrosome. Functionally, regulatory subunit (beta subunit) of the cytosolic type I platelet-activating factor (PAF) acetylhydrolase (PAF-AH (I)), an enzyme that catalyzes the hydrolyze of the acetyl group at the sn-2 position of PAF and its analogs and participates in PAF inactivation. Regulates the PAF-AH (I) activity in a catalytic dimer composition-dependent manner. Positively regulates the activity of the minus-end directed microtubule motor protein dynein. May enhance dynein-mediated microtubule sliding by targeting dynein to the microtubule plus end. Required for several dynein- and microtubule-dependent processes such as the maintenance of Golgi integrity, the peripheral transport of microtubule fragments and the coupling of the nucleus and centrosome. May be required for proliferation of neuronal precursors and neuronal migration. This Salmo salar (Atlantic salmon) protein is Lissencephaly-1 homolog A (pafah1b1-1).